Here is a 93-residue protein sequence, read N- to C-terminus: Small ribosomal subunit protein uS19 (93 aa).

The protein belongs to the universal ribosomal protein uS19 family.

Functionally, protein S19 forms a complex with S13 that binds strongly to the 16S ribosomal RNA. The polypeptide is Small ribosomal subunit protein uS19 (Rubrobacter xylanophilus (strain DSM 9941 / JCM 11954 / NBRC 16129 / PRD-1)).